The sequence spans 831 residues: V-type proton ATPase subunit a (831 aa).

Residues 1 to 418 (MSPSLFRSEE…DSYGIATYRE (418 aa)) are Cytoplasmic-facing. Residues 419 to 437 (VNHGIVAIVTFPFLFAIMF) traverse the membrane as a helical segment. Residues 438-439 (GD) are Vacuolar-facing. A helical membrane pass occupies residues 440 to 456 (LGHGAIMASVALMFVLY). The Cytoplasmic segment spans residues 457–471 (EKTLGAKKDLDEIVG). A helical transmembrane segment spans residues 472 to 501 (MVFYGRYIVLLMGLFSMYVGFVYNDLFSKP). The Vacuolar portion of the chain corresponds to 502–548 (MSIFSSRWVWPVKSEEAIARAVQVGTYPIGIDPTWHSADNNLLFMNS). A helical membrane pass occupies residues 549–568 (YKMKLSIILGVIHMTFCLFL). The Cytoplasmic portion of the chain corresponds to 569-586 (SLSNYRFFKRKLDIYAVF). Residues 587-607 (VPSLIFLEAIFGYLVITIVYK) traverse the membrane as a helical segment. Residues 608-650 (WCIDWKAKDLQPPSLLNMLILMFLSPGTLEDQLYPGQKYLQVG) are Vacuolar-facing. Residues 651 to 670 (LVIAALICVPWLLIVKPFVL) form a helical membrane-spanning segment. Topologically, residues 671–723 (WRRHSNEENKYQSLNSDLPNVDEADALMAVDSQEKQAEPFELGEVVIHQVIHT) are cytoplasmic. Residues 724–748 (IEFCLGCVSHTASYLRLWALSLAHN) traverse the membrane as a helical segment. The Vacuolar portion of the chain corresponds to 749–769 (QLSSVLWNMTLANGFRMTGIV). The helical transmembrane segment at 770 to 808 (GSIFVVILFGFWFIATCVVLVAMEGTSAMLHSLRLHWVE) threads the bilayer. At 809-831 (GMSKHFEGEGYAFTPFTFKVTAE) the chain is on the cytoplasmic side.

The protein belongs to the V-ATPase 116 kDa subunit family. As to quaternary structure, V-ATPase is a heteromultimeric enzyme composed of a peripheral catalytic V1 complex (components A to H) attached to an integral membrane V0 proton pore complex (components: a, c, c', c'', d, e, f and VOA1).

It localises to the vacuole membrane. Subunit of the V0 complex of vacuolar(H+)-ATPase (V-ATPase), a multisubunit enzyme composed of a peripheral complex (V1) that hydrolyzes ATP and a membrane integral complex (V0) that translocates protons. V-ATPase is responsible for acidifying and maintaining the pH of intracellular compartments. This chain is V-type proton ATPase subunit a (vph1), found in Schizosaccharomyces pombe (strain 972 / ATCC 24843) (Fission yeast).